Reading from the N-terminus, the 1501-residue chain is Pleiotropic ABC efflux transporter of multiple drugs CDR1 (1501 aa).

The segment at 1–30 is disordered; that stretch reads MSDSKMSSQDESKLEKAISQDSSSENHSIN. Residues 1–513 lie on the Cytoplasmic side of the membrane; the sequence is MSDSKMSSQD…NFLRMKGDPS (513 aa). Residues 2 to 512 form an NBD1 region; the sequence is SDSKMSSQDE…RNFLRMKGDP (511 aa). The segment covering 8–18 has biased composition (basic and acidic residues); the sequence is SQDESKLEKAI. The region spanning 150–404 is the ABC transporter 1 domain; that stretch reads LATEGFRHFQ…FEKMGWKCPQ (255 aa). Residues 514–534 traverse the membrane as a helical segment; it reads IPIFSVFGQLVMGLILSSVFY. Over 535 to 548 the chain is Extracellular; the sequence is NLSQTTGSFYYRGA. The helical transmembrane segment at 549–569 threads the bilayer; sequence AMFFAVLFNAFSSLLEIMSLF. Residues 570–597 are Cytoplasmic-facing; it reads EARPIVEKHKKYALYRPSADALASIISE. A helical membrane pass occupies residues 598–618; that stretch reads LPVKLAMSMSFNFVFYFMVNF. The Extracellular portion of the chain corresponds to 619–622; that stretch reads RRNP. Residues 623–643 form a helical membrane-spanning segment; sequence GRFFFYWLMCIWCTFVMSHLF. Topologically, residues 644–654 are cytoplasmic; it reads RSIGAVSTSIS. Residues 655-675 traverse the membrane as a helical segment; sequence GAMTPATVLLLAMVIYTGFVI. Residues 676 to 764 lie on the Extracellular side of the membrane; the sequence is PTPSMLGWSR…QYYNSHKWRN (89 aa). Residues 765–785 traverse the membrane as a helical segment; that stretch reads LGITIGFAVFFLAIYIALTEF. Topologically, residues 786–1195 are cytoplasmic; it reads NKGAMQKGEI…TIVQDWRSPG (410 aa). The interval 786–1195 is NBD2; sequence NKGAMQKGEI…TIVQDWRSPG (410 aa). In terms of domain architecture, ABC transporter 2 spans 859–1103; that stretch reads FFWRDLTYQV…MINYFEKYGA (245 aa). Residue 895 to 902 participates in ATP binding; sequence GASGAGKT. A coiled-coil region spans residues 1137–1164; sequence RNSSEYQAVREEINRMEAELSKLPRDND. A helical membrane pass occupies residues 1196-1216; it reads YIYSKIFLVVSAALFNGFSFF. Residues 1217–1229 are Extracellular-facing; that stretch reads KAKNNMQGLQNQM. Residues 1230 to 1250 form a helical membrane-spanning segment; sequence FSVFMFFIPFNTLVQQMLPYF. The Cytoplasmic portion of the chain corresponds to 1251 to 1280; it reads VKQRDVYEVREAPSRTFSWFAFIAGQITSE. The helical transmembrane segment at 1281-1301 threads the bilayer; it reads IPYQVAVGTIAFFCWYYPLGL. Residues 1302–1314 are Extracellular-facing; sequence YNNATPTDSVNPR. The helical transmembrane segment at 1315–1335 threads the bilayer; it reads GVLMWMLVTAFYVYTATMGQL. Residues 1336 to 1355 lie on the Cytoplasmic side of the membrane; the sequence is CMSFSELADNAANLATLLFT. A helical transmembrane segment spans residues 1356–1376; sequence MCLNFCGVLAGPDVLPGFWIF. At 1377 to 1466 the chain is on the extracellular side; it reads MYRCNPFTYL…NSLYSERWRN (90 aa). The helical transmembrane segment at 1467–1487 threads the bilayer; sequence FGIFIAFIAINIILTVIFYWL. The Cytoplasmic segment spans residues 1488 to 1501; sequence ARVPKGNREKKNKK.

Belongs to the ABC transporter superfamily.

The protein localises to the cell membrane. With respect to regulation, disulfiram reverses CDR1-mediated drug resistance by interaction with both ATP and substrate-binding sites of the transporter and may be useful for antifungal therapy. Its function is as follows. Pleiotropic ABC efflux transporter that confers resistance to numerous chemicals including anisomycin, cycloheximide, fluconazole, miconazole, ketoconazole, itriconazole, nystatin, terbinafine, amorolfine, brefeldin A, amphotericin B, fluphenazine, as well as estrogen. Plays a role in farnesol-induced apoptotic process through glutathione efflux activity. Mediates in-to-out translocation of membrane phospholipids including aminophospholipids and thus regulates asymmetric distribution of phosphatidylethanolamine. Exhibits nucleoside triphosphatase activity. The chain is Pleiotropic ABC efflux transporter of multiple drugs CDR1 (CDR1) from Candida albicans (strain SC5314 / ATCC MYA-2876) (Yeast).